The primary structure comprises 339 residues: MCAQYCISFADVEKAHINIQDSIHLTPVLTSSILNQIAGRNLFFKCELFQKTGSFKIRGALNAIRGLIPDTPEEKPKAVVTHSSGNHGQALTYAAKLEGIPAYIVVPQTAPNCKKLAIQAYGASIVYCDPSDESREKVTQRIMQETEGILVHPNQEPAVIAGQGTIALEVLNQVPLVDALVVPVGGGGMVAGIAITIKALKPSVKVYAAEPSNADDCYQSKLKGELTPNLHPPETIADGVKSSIGLNTWPIIRDLVDDVFTVTEDEIKYATQLVWGRMKLLIEPTAGVALAAVLSQHFQTVSPEVKNVCIVLSGGNVDLTSLNWVGQAERPAPYQTVSV.

E13 provides a ligand contact to Mg(2+). Residues S31, S32, I33, K51, and T52 each coordinate ATP. K56 (proton acceptor) is an active-site residue. N6-(pyridoxal phosphate)lysine is present on K56. P69 is a Ca(2+) binding site. The residue at position 71 (T71) is a Phosphothreonine. T81 serves as a coordination point for Ca(2+). Catalysis depends on S84, which acts as the Proton acceptor. Pyridoxal 5'-phosphate is bound at residue N86. Q89 lines the ATP pocket. Position 113 is an S-nitrosocysteine (C113). Y121 serves as a coordination point for ATP. A pyridoxal 5'-phosphate-binding site is contributed by N154. D178 is a binding site for Mg(2+). Pyridoxal 5'-phosphate-binding residues include G185, G186, G187, G188, and M189. Mg(2+) is bound by residues E210, A214, D216, and N247. Ca(2+)-binding residues include E210, A214, D216, and N247. Mn(2+) contacts are provided by E210, A214, and D216. K279 contributes to the ATP binding site. S313 serves as a coordination point for pyridoxal 5'-phosphate. ATP is bound at residue N316.

The protein belongs to the serine/threonine dehydratase family. In terms of assembly, homodimer. Mg(2+) serves as cofactor. Mn(2+) is required as a cofactor. Requires Ca(2+) as cofactor. It depends on pyridoxal 5'-phosphate as a cofactor. In terms of processing, S-nitrosylated, leading to decrease the enzyme activity. As to expression, expressed in the hippocampus (at protein level). Expressed in the small intestine.

The enzyme catalyses L-serine = D-serine. It catalyses the reaction D-serine = pyruvate + NH4(+). It carries out the reaction L-serine = pyruvate + NH4(+). With respect to regulation, allosterically activated by magnesium, and possibly also other divalent metal cations. Allosterically activated by ATP, ADP or GTP. Functionally, catalyzes the synthesis of D-serine from L-serine. D-serine is a key coagonist with glutamate at NMDA receptors. Has dehydratase activity towards both L-serine and D-serine. In Mus musculus (Mouse), this protein is Serine racemase (Srr).